Reading from the N-terminus, the 475-residue chain is Sensor histidine kinase QseE (475 aa).

The Cytoplasmic portion of the chain corresponds to Met-1–Gln-13. A helical membrane pass occupies residues Leu-14 to Trp-34. The Periplasmic segment spans residues Gln-35–Gln-173. The helical transmembrane segment at Tyr-174–Thr-194 threads the bilayer. The Cytoplasmic portion of the chain corresponds to Arg-195 to Lys-475. The region spanning His-256–Lys-472 is the Histidine kinase domain. His-259 carries the post-translational modification Phosphohistidine; by autocatalysis.

In terms of processing, autophosphorylated.

Its subcellular location is the cell inner membrane. The enzyme catalyses ATP + protein L-histidine = ADP + protein N-phospho-L-histidine.. Member of the two-component regulatory system QseF/QseE involved in the regulation of virulence and metabolism in EHEC. Required for pedestal formation in host epithelial cells during infection. Autophosphorylates in response to epinephrine, sulfate or phosphate and then probably transfers its phosphate group to QseF. This chain is Sensor histidine kinase QseE (qseE), found in Escherichia coli O157:H7.